We begin with the raw amino-acid sequence, 420 residues long: Light-independent protochlorophyllide reductase subunit N (420 aa).

[4Fe-4S] cluster is bound by residues cysteine 21, cysteine 46, and cysteine 103.

The protein belongs to the BchN/ChlN family. As to quaternary structure, protochlorophyllide reductase is composed of three subunits; BchL, BchN and BchB. Forms a heterotetramer of two BchB and two BchN subunits. [4Fe-4S] cluster serves as cofactor.

It carries out the reaction chlorophyllide a + oxidized 2[4Fe-4S]-[ferredoxin] + 2 ADP + 2 phosphate = protochlorophyllide a + reduced 2[4Fe-4S]-[ferredoxin] + 2 ATP + 2 H2O. Its pathway is porphyrin-containing compound metabolism; bacteriochlorophyll biosynthesis (light-independent). Its function is as follows. Component of the dark-operative protochlorophyllide reductase (DPOR) that uses Mg-ATP and reduced ferredoxin to reduce ring D of protochlorophyllide (Pchlide) to form chlorophyllide a (Chlide). This reaction is light-independent. The NB-protein (BchN-BchB) is the catalytic component of the complex. This chain is Light-independent protochlorophyllide reductase subunit N, found in Chlorobium phaeobacteroides (strain DSM 266 / SMG 266 / 2430).